The chain runs to 414 residues: Zinc metalloproteinase-disintegrin-like batroxstatin-3 (414 aa).

N-linked (GlcNAc...) asparagine glycans are attached at residues N7 and N70. Residues 10-204 (KYIKLVIVAD…HTPQCILNEP (195 aa)) enclose the Peptidase M12B domain. 3 disulfides stabilise this stretch: C121-C199, C161-C183, and C163-C168. Zn(2+) is bound at residue H146. The active site involves E147. Residues H150 and H156 each coordinate Zn(2+). In terms of domain architecture, Disintegrin spans 212–298 (PEVCGNYLLE…HCPTDRFHRN (87 aa)). 5 residues coordinate Ca(2+): V214, N217, E221, E224, and D227. 14 disulfide bridges follow: C215–C244, C226–C239, C228–C234, C238–C261, C252–C258, C257–C283, C270–C290, C277–C309, C302–C314, C321–C371, C336–C381, C349–C359, C366–C403, and C397–C408. The D/ECD-tripeptide signature appears at 276 to 278 (ECD). Positions 278, 281, 293, and 294 each coordinate Ca(2+).

It belongs to the venom metalloproteinase (M12B) family. P-III subfamily. P-IIIa sub-subfamily. As to quaternary structure, monomer. Requires Zn(2+) as cofactor. In terms of tissue distribution, expressed by the venom gland.

It is found in the secreted. Its function is as follows. Snake venom zinc metalloprotease that induces apoptosis in vascular endothelial cells (VEC), without degrading the extracellular matrix (it cannot cleave collagen) or inhibiting adhesion of VEC. Has also fibrinogenolytic and hemorrhagic activities. The protein is Zinc metalloproteinase-disintegrin-like batroxstatin-3 of Bothrops atrox (Barba amarilla).